An 805-amino-acid chain; its full sequence is Leucine--tRNA ligase (805 aa).

The short motif at 41 to 52 (PYPSGAGLHVGH) is the 'HIGH' region element. The 'KMSKS' region motif lies at 577 to 581 (KMSKS). Lysine 580 provides a ligand contact to ATP.

It belongs to the class-I aminoacyl-tRNA synthetase family.

It is found in the cytoplasm. It carries out the reaction tRNA(Leu) + L-leucine + ATP = L-leucyl-tRNA(Leu) + AMP + diphosphate. The protein is Leucine--tRNA ligase of Staphylococcus aureus (strain JH1).